Reading from the N-terminus, the 393-residue chain is Phosphopentomutase (393 aa).

Mn(2+) is bound by residues Asp-13, Asp-286, His-291, Asp-327, His-328, and His-339.

This sequence belongs to the phosphopentomutase family. Mn(2+) serves as cofactor.

It is found in the cytoplasm. The catalysed reaction is 2-deoxy-alpha-D-ribose 1-phosphate = 2-deoxy-D-ribose 5-phosphate. It carries out the reaction alpha-D-ribose 1-phosphate = D-ribose 5-phosphate. Its pathway is carbohydrate degradation; 2-deoxy-D-ribose 1-phosphate degradation; D-glyceraldehyde 3-phosphate and acetaldehyde from 2-deoxy-alpha-D-ribose 1-phosphate: step 1/2. In terms of biological role, isomerase that catalyzes the conversion of deoxy-ribose 1-phosphate (dRib-1-P) and ribose 1-phosphate (Rib-1-P) to deoxy-ribose 5-phosphate (dRib-5-P) and ribose 5-phosphate (Rib-5-P), respectively. The sequence is that of Phosphopentomutase from Symbiobacterium thermophilum (strain DSM 24528 / JCM 14929 / IAM 14863 / T).